The chain runs to 413 residues: Eukaryotic initiation factor 4A-11 (413 aa).

The Q motif signature appears at 40-68; the sequence is ESFDAMGLQENLLRGIYAYGFEKPSAIQQ. The 171-residue stretch at 71-241 folds into the Helicase ATP-binding domain; it reads IVPFCKGLDV…RKFMNKPVRI (171 aa). 84-91 contacts ATP; that stretch reads AQSGTGKT. The DEAD box motif lies at 189-192; the sequence is DEAD. A Helicase C-terminal domain is found at 252–413; sequence GIKQFYVNVD…ELPANVADLL (162 aa).

The protein belongs to the DEAD box helicase family. eIF4A subfamily. EIF4F is a multi-subunit complex, the composition of which varies with external and internal environmental conditions. It is composed of at least EIF4A, EIF4E and EIF4G.

It catalyses the reaction ATP + H2O = ADP + phosphate + H(+). Its function is as follows. ATP-dependent RNA helicase which is a subunit of the eIF4F complex involved in cap recognition and is required for mRNA binding to ribosome. In the current model of translation initiation, eIF4A unwinds RNA secondary structures in the 5'-UTR of mRNAs which is necessary to allow efficient binding of the small ribosomal subunit, and subsequent scanning for the initiator codon. This Nicotiana tabacum (Common tobacco) protein is Eukaryotic initiation factor 4A-11.